A 298-amino-acid polypeptide reads, in one-letter code: Rhodopsin (298 aa).

At 1–15 (IHLHWYEYPPMNPMM) the chain is on the extracellular side. A helical membrane pass occupies residues 16–40 (YPLLLIFMLFTGILCLAGNFVTIWV). Residues 41 to 52 (FMNTKSLRTPAN) lie on the Cytoplasmic side of the membrane. The helical transmembrane segment at 53-75 (LLVVNLAMSDFLMMFTMFPPMMV) threads the bilayer. At 76 to 89 (TCYYHTWTLGPTFC) the chain is on the extracellular side. Cysteines 89 and 166 form a disulfide. A helical transmembrane segment spans residues 90 to 112 (QVYAFLGNLCGCASIWTMVFITF). A 'Ionic lock' involved in activated form stabilization motif is present at residues 113–115 (DRY). Residues 113-131 (DRYNVIVKGVAGEPLSTKK) are Cytoplasmic-facing. A helical membrane pass occupies residues 132–152 (ASLWILTIWVLSTTWCMAPFF). Residues 153–179 (GWNHYVPEGNLTGCGTDYLSEDILSRS) are Extracellular-facing. N-linked (GlcNAc...) asparagine glycosylation is present at asparagine 162. Residues 180–201 (YLYVYSTWVYFLPLAITIYCYV) form a helical membrane-spanning segment. At 202–242 (FIIKAVAAHEKGMRDQAKKMGIKSLRNEEAQKTSAECRLAK) the chain is on the cytoplasmic side. The helical transmembrane segment at 243–264 (IAMTTVALWFIAWTPYLLINWV) threads the bilayer. Over 265-275 (GMFARSYLSPV) the chain is Extracellular. A helical membrane pass occupies residues 276-297 (YTIWGYVFAKANAVYNPIVYAI). Lysine 285 carries the post-translational modification N6-(retinylidene)lysine.

Belongs to the G-protein coupled receptor 1 family. Opsin subfamily. Homodimer. Interacts with GNAQ. In terms of processing, contains one covalently linked retinal chromophore.

It localises to the cell projection. The protein resides in the rhabdomere membrane. Functionally, photoreceptor required for image-forming vision at low light intensity. Can use both retinal and 3-dehydroretinal as visual pigment. Light-induced isomerization of 11-cis to all-trans retinal triggers a conformational change that activates signaling via G-proteins. Signaling via GNAQ probably mediates the activation of phospholipase C. The protein is Rhodopsin (RHO) of Procambarus orcinus (Crayfish).